The following is a 273-amino-acid chain: Transposable element Tcb1 transposase (273 aa).

This sequence belongs to the transposase 5 family.

It localises to the nucleus. In terms of biological role, probably essential for transposable element Tcb1 transposition. The insertion of Tcb1 is the main cause of spontaneous mutations. The sequence is that of Transposable element Tcb1 transposase from Caenorhabditis briggsae.